A 339-amino-acid polypeptide reads, in one-letter code: MRISAAGGGTGGHLYPAVSILEKLAEMKKLNVTYFCLEKGIESKILPLEHPEYKLIKIDLKGLERPIWKPSNFTRLLKISQSESIIALEIKQCDFGLMTGGYISYPVGKVCKKLKKPFFIQEQNVVPGLANKALSLSAKKIFVAFDKTVEFFPKSVRNKILVTGNPVREKDNEEMLFGKDYVLVLGGSRGSEFINNLMEEVYKVEHNLKFVHSTGSKEWVDRLSIFENVKAVDYIYNASAAWKGARAVIARAGATTIGEMLYYGLPGILVPWDGATGSHQLYNALEIEKMGKALVLKECDATVSTLLKKLYQVLEMDKKPKMKINPAEIIAKTILEELK.

UDP-N-acetyl-alpha-D-glucosamine contacts are provided by residues 10 to 12, N124, R168, S188, I235, and Q280; that span reads TGG.

Belongs to the glycosyltransferase 28 family. MurG subfamily.

It is found in the cell inner membrane. The enzyme catalyses di-trans,octa-cis-undecaprenyl diphospho-N-acetyl-alpha-D-muramoyl-L-alanyl-D-glutamyl-meso-2,6-diaminopimeloyl-D-alanyl-D-alanine + UDP-N-acetyl-alpha-D-glucosamine = di-trans,octa-cis-undecaprenyl diphospho-[N-acetyl-alpha-D-glucosaminyl-(1-&gt;4)]-N-acetyl-alpha-D-muramoyl-L-alanyl-D-glutamyl-meso-2,6-diaminopimeloyl-D-alanyl-D-alanine + UDP + H(+). Its pathway is cell wall biogenesis; peptidoglycan biosynthesis. In terms of biological role, cell wall formation. Catalyzes the transfer of a GlcNAc subunit on undecaprenyl-pyrophosphoryl-MurNAc-pentapeptide (lipid intermediate I) to form undecaprenyl-pyrophosphoryl-MurNAc-(pentapeptide)GlcNAc (lipid intermediate II). This Pseudothermotoga lettingae (strain ATCC BAA-301 / DSM 14385 / NBRC 107922 / TMO) (Thermotoga lettingae) protein is UDP-N-acetylglucosamine--N-acetylmuramyl-(pentapeptide) pyrophosphoryl-undecaprenol N-acetylglucosamine transferase.